The sequence spans 352 residues: Phenylalanine--tRNA ligase alpha subunit (352 aa).

Glu-258 contacts Mg(2+).

The protein belongs to the class-II aminoacyl-tRNA synthetase family. Phe-tRNA synthetase alpha subunit type 1 subfamily. Tetramer of two alpha and two beta subunits. Mg(2+) is required as a cofactor.

Its subcellular location is the cytoplasm. The enzyme catalyses tRNA(Phe) + L-phenylalanine + ATP = L-phenylalanyl-tRNA(Phe) + AMP + diphosphate + H(+). This is Phenylalanine--tRNA ligase alpha subunit from Staphylococcus carnosus (strain TM300).